The sequence spans 933 residues: Dual 3',5'-cyclic-AMP and -GMP phosphodiesterase 11A (933 aa).

The tract at residues 42–121 (HTSGQGASSL…LQRRASQKEL (80 aa)) is disordered. Residues Ser-162, Ser-163, and Ser-239 each carry the phosphoserine modification. 2 GAF domains span residues 217-370 (DLTS…GIAI) and 402-558 (DLEK…GLGI). Ser-424 provides a ligand contact to 3',5'-cyclic GMP. Residues 588 to 912 (SKAEVDKFKA…RKWEELHQKR (325 aa)) form the PDEase domain. The active-site Proton donor is the His-664. Residues His-668, His-704, Asp-705, and Asp-816 each contribute to the a divalent metal cation site. The segment at 913–933 (LQVSAASPDPASPMVAGEDRL) is disordered.

It belongs to the cyclic nucleotide phosphodiesterase family. It depends on a divalent metal cation as a cofactor. In terms of tissue distribution, expressed in testis and developing spermatoza.

Its subcellular location is the cytoplasm. The protein localises to the cytosol. It catalyses the reaction 3',5'-cyclic GMP + H2O = GMP + H(+). The enzyme catalyses 3',5'-cyclic AMP + H2O = AMP + H(+). With respect to regulation, inhibited by 3-isobutyl-1-methylxanthine (IBMX), zaprinast and dipyridamole. cGMP acts as an allosteric activator. In terms of biological role, plays a role in signal transduction by regulating the intracellular concentration of cyclic nucleotides cAMP and cGMP. Catalyzes the hydrolysis of both cAMP and cGMP to 5'-AMP and 5'-GMP, respectively. The protein is Dual 3',5'-cyclic-AMP and -GMP phosphodiesterase 11A (Pde11a) of Mus musculus (Mouse).